A 550-amino-acid chain; its full sequence is U-box domain-containing protein 40 (550 aa).

Positions 19-29 are enriched in basic and acidic residues; that stretch reads KSDNLSRRESL. The segment at 19 to 55 is disordered; it reads KSDNLSRRESLAGKSKWRTSLSRSSSSSSSNNNSPTK. Low complexity predominate over residues 38-52; the sequence is SLSRSSSSSSSNNNS. Residues 57–127 enclose the U-box domain; that stretch reads EIPAEFLCPI…HSWCERRCFP (71 aa). 5 ARM repeats span residues 260–299, 301–340, 342–381, 383–420, and 422–464; these read ESSR…NLSL, KSNK…SLAL, DENK…HLSL, QSNR…NMAS, and PVSR…GLSH.

It catalyses the reaction S-ubiquitinyl-[E2 ubiquitin-conjugating enzyme]-L-cysteine + [acceptor protein]-L-lysine = [E2 ubiquitin-conjugating enzyme]-L-cysteine + N(6)-ubiquitinyl-[acceptor protein]-L-lysine.. Its pathway is protein modification; protein ubiquitination. Functions as an E3 ubiquitin ligase. This chain is U-box domain-containing protein 40 (PUB40), found in Arabidopsis thaliana (Mouse-ear cress).